The chain runs to 379 residues: Chaperone protein DnaJ (379 aa).

The region spanning 7–72 is the J domain; the sequence is CYYETLEVER…DKRAAYDRYG (66 aa). Residues 135-213 form a CR-type zinc finger; that stretch reads GKTAQIEIPV…CTGSGRVTKE (79 aa). Zn(2+) contacts are provided by C148, C151, C165, C168, C187, C190, C201, and C204. 4 CXXCXGXG motif repeats span residues 148-155, 165-172, 187-194, and 201-208; these read CEACSGTG, CSTCGGAG, CPSCQGRG, and CPSCTGSG.

This sequence belongs to the DnaJ family. In terms of assembly, homodimer. Zn(2+) serves as cofactor.

The protein localises to the cytoplasm. Participates actively in the response to hyperosmotic and heat shock by preventing the aggregation of stress-denatured proteins and by disaggregating proteins, also in an autonomous, DnaK-independent fashion. Unfolded proteins bind initially to DnaJ; upon interaction with the DnaJ-bound protein, DnaK hydrolyzes its bound ATP, resulting in the formation of a stable complex. GrpE releases ADP from DnaK; ATP binding to DnaK triggers the release of the substrate protein, thus completing the reaction cycle. Several rounds of ATP-dependent interactions between DnaJ, DnaK and GrpE are required for fully efficient folding. Also involved, together with DnaK and GrpE, in the DNA replication of plasmids through activation of initiation proteins. In Rhodopseudomonas palustris (strain ATCC BAA-98 / CGA009), this protein is Chaperone protein DnaJ.